The chain runs to 565 residues: uncharacterized protein (565 aa).

The next 5 membrane-spanning stretches (helical) occupy residues Leu-14–Phe-34, Leu-36–Val-56, Met-92–Ile-112, Val-117–Ala-137, and Ile-157–Leu-177. The region spanning Pro-296 to Tyr-381 is the RCK C-terminal domain. 6 consecutive transmembrane segments (helical) span residues Met-391–Met-411, Val-414–Leu-434, Ala-448–Ala-468, Leu-481–Met-501, Phe-508–Ile-530, and Val-545–Met-565.

The protein belongs to the AAE transporter (TC 2.A.81) family.

The protein resides in the cell membrane. This is an uncharacterized protein from Bacteroides fragilis (strain YCH46).